The following is a 419-amino-acid chain: Lipoyl synthase, mitochondrial (419 aa).

The N-terminal 26 residues, 1 to 26 (MAVCAGRLKCFGNPAVSLRTAASRAY), are a transit peptide targeting the mitochondrion. Positions 28–47 (TTTSPDPAIPSSSSASSSSA) are enriched in low complexity. The tract at residues 28 to 61 (TTTSPDPAIPSSSSASSSSALPKRPQTSFRDKLN) is disordered. 7 residues coordinate [4Fe-4S] cluster: Cys136, Cys141, Cys147, Cys167, Cys171, Cys174, and Ser382. Residues 150 to 371 (GSSKSAATAT…KDRALEMGFL (222 aa)) enclose the Radical SAM core domain. Residues 399–419 (AESTGPESTNVPNVTPDAIVR) form a disordered region.

The protein belongs to the radical SAM superfamily. Lipoyl synthase family. Requires [4Fe-4S] cluster as cofactor.

It localises to the mitochondrion. It catalyses the reaction [[Fe-S] cluster scaffold protein carrying a second [4Fe-4S](2+) cluster] + N(6)-octanoyl-L-lysyl-[protein] + 2 oxidized [2Fe-2S]-[ferredoxin] + 2 S-adenosyl-L-methionine + 4 H(+) = [[Fe-S] cluster scaffold protein] + N(6)-[(R)-dihydrolipoyl]-L-lysyl-[protein] + 4 Fe(3+) + 2 hydrogen sulfide + 2 5'-deoxyadenosine + 2 L-methionine + 2 reduced [2Fe-2S]-[ferredoxin]. Its pathway is protein modification; protein lipoylation via endogenous pathway; protein N(6)-(lipoyl)lysine from octanoyl-[acyl-carrier-protein]: step 2/2. Catalyzes the radical-mediated insertion of two sulfur atoms into the C-6 and C-8 positions of the octanoyl moiety bound to the lipoyl domains of lipoate-dependent enzymes, thereby converting the octanoylated domains into lipoylated derivatives. This chain is Lipoyl synthase, mitochondrial, found in Coccidioides posadasii (strain C735) (Valley fever fungus).